The chain runs to 196 residues: Imidazole glycerol phosphate synthase subunit HisH (196 aa).

A Glutamine amidotransferase type-1 domain is found at 2–196; that stretch reads NIVIIDTNCS…QQLVKNFLEI (195 aa). The active-site Nucleophile is the C77. Active-site residues include H178 and E180.

As to quaternary structure, heterodimer of HisH and HisF.

Its subcellular location is the cytoplasm. The catalysed reaction is 5-[(5-phospho-1-deoxy-D-ribulos-1-ylimino)methylamino]-1-(5-phospho-beta-D-ribosyl)imidazole-4-carboxamide + L-glutamine = D-erythro-1-(imidazol-4-yl)glycerol 3-phosphate + 5-amino-1-(5-phospho-beta-D-ribosyl)imidazole-4-carboxamide + L-glutamate + H(+). It catalyses the reaction L-glutamine + H2O = L-glutamate + NH4(+). It functions in the pathway amino-acid biosynthesis; L-histidine biosynthesis; L-histidine from 5-phospho-alpha-D-ribose 1-diphosphate: step 5/9. In terms of biological role, IGPS catalyzes the conversion of PRFAR and glutamine to IGP, AICAR and glutamate. The HisH subunit catalyzes the hydrolysis of glutamine to glutamate and ammonia as part of the synthesis of IGP and AICAR. The resulting ammonia molecule is channeled to the active site of HisF. This is Imidazole glycerol phosphate synthase subunit HisH from Blochmanniella pennsylvanica (strain BPEN).